The primary structure comprises 196 residues: Auxin-induced protein 22B (196 aa).

The short motif at 18-22 (LRLGL) is the EAR-like (transcriptional repression) element. The interval 44-74 (RQVRETSQDSVSISKASHHQQHVETVSAPPP) is disordered. The PB1 domain maps to 99-186 (GIFVKVSMDG…SCKRLRIMKG (88 aa)).

This sequence belongs to the Aux/IAA family. Homodimers and heterodimers.

It localises to the nucleus. Functionally, aux/IAA proteins are short-lived transcriptional factors that function as repressors of early auxin response genes at low auxin concentrations. Repression is thought to result from the interaction with auxin response factors (ARFs), proteins that bind to the auxin-responsive promoter element (AuxRE). Formation of heterodimers with ARF proteins may alter their ability to modulate early auxin response genes expression. The sequence is that of Auxin-induced protein 22B (AUX22B) from Vigna radiata var. radiata (Mung bean).